Here is a 543-residue protein sequence, read N- to C-terminus: CTP synthase (543 aa).

The tract at residues 1-267 (MKQTKYIFVT…LSPIAEILDL (267 aa)) is amidoligase domain. A CTP-binding site is contributed by serine 15. Serine 15 is a UTP binding site. Residues 16 to 21 (SLGKGI) and aspartate 73 each bind ATP. Residues aspartate 73 and glutamate 141 each contribute to the Mg(2+) site. CTP is bound by residues 148–150 (DIE), 188–193 (KTKPTQ), and lysine 224. Residues 188-193 (KTKPTQ) and lysine 224 each bind UTP. Residues 292–543 (KIAFVGKYVD…IKAAINYEDN (252 aa)) form the Glutamine amidotransferase type-1 domain. Glycine 354 serves as a coordination point for L-glutamine. Residue cysteine 381 is the Nucleophile; for glutamine hydrolysis of the active site. L-glutamine is bound by residues 382-385 (LGMQ), glutamate 405, and arginine 473. Active-site residues include histidine 516 and glutamate 518.

This sequence belongs to the CTP synthase family. As to quaternary structure, homotetramer.

It carries out the reaction UTP + L-glutamine + ATP + H2O = CTP + L-glutamate + ADP + phosphate + 2 H(+). The catalysed reaction is L-glutamine + H2O = L-glutamate + NH4(+). It catalyses the reaction UTP + NH4(+) + ATP = CTP + ADP + phosphate + 2 H(+). The protein operates within pyrimidine metabolism; CTP biosynthesis via de novo pathway; CTP from UDP: step 2/2. Its activity is regulated as follows. Allosterically activated by GTP, when glutamine is the substrate; GTP has no effect on the reaction when ammonia is the substrate. The allosteric effector GTP functions by stabilizing the protein conformation that binds the tetrahedral intermediate(s) formed during glutamine hydrolysis. Inhibited by the product CTP, via allosteric rather than competitive inhibition. Its function is as follows. Catalyzes the ATP-dependent amination of UTP to CTP with either L-glutamine or ammonia as the source of nitrogen. Regulates intracellular CTP levels through interactions with the four ribonucleotide triphosphates. This Campylobacter jejuni subsp. jejuni serotype O:2 (strain ATCC 700819 / NCTC 11168) protein is CTP synthase.